The following is a 354-amino-acid chain: UDP-N-acetylglucosamine--N-acetylmuramyl-(pentapeptide) pyrophosphoryl-undecaprenol N-acetylglucosamine transferase (354 aa).

Residues 15 to 17 (TGG), asparagine 127, arginine 163, serine 191, isoleucine 244, 263 to 268 (ALTVSE), and glutamine 288 contribute to the UDP-N-acetyl-alpha-D-glucosamine site.

It belongs to the glycosyltransferase 28 family. MurG subfamily.

The protein resides in the cell inner membrane. It catalyses the reaction di-trans,octa-cis-undecaprenyl diphospho-N-acetyl-alpha-D-muramoyl-L-alanyl-D-glutamyl-meso-2,6-diaminopimeloyl-D-alanyl-D-alanine + UDP-N-acetyl-alpha-D-glucosamine = di-trans,octa-cis-undecaprenyl diphospho-[N-acetyl-alpha-D-glucosaminyl-(1-&gt;4)]-N-acetyl-alpha-D-muramoyl-L-alanyl-D-glutamyl-meso-2,6-diaminopimeloyl-D-alanyl-D-alanine + UDP + H(+). It participates in cell wall biogenesis; peptidoglycan biosynthesis. Functionally, cell wall formation. Catalyzes the transfer of a GlcNAc subunit on undecaprenyl-pyrophosphoryl-MurNAc-pentapeptide (lipid intermediate I) to form undecaprenyl-pyrophosphoryl-MurNAc-(pentapeptide)GlcNAc (lipid intermediate II). In Aliivibrio salmonicida (strain LFI1238) (Vibrio salmonicida (strain LFI1238)), this protein is UDP-N-acetylglucosamine--N-acetylmuramyl-(pentapeptide) pyrophosphoryl-undecaprenol N-acetylglucosamine transferase.